The sequence spans 218 residues: LHFPL tetraspan subfamily member 3 protein (218 aa).

4 consecutive transmembrane segments (helical) span residues 22–42 (IGVLWAIFTICFAIVNIVCFI), 96–116 (FFIGLSMTLIIGCIVSFGLFF), 126–146 (ICAWMQLCSAACLVLGCMIFP), and 177–197 (ILAIIGILDALILSFLAFVLG).

It belongs to the LHFP family.

The protein resides in the membrane. This chain is LHFPL tetraspan subfamily member 3 protein, found in Xenopus laevis (African clawed frog).